The chain runs to 240 residues: HTH-type transcriptional repressor STM4068 (240 aa).

The HTH gntR-type domain maps to 9-77 (TPLYKQLFFI…RGSGSVVCSV (69 aa)). A DNA-binding region (H-T-H motif) is located at residues 37–56 (QKEIARSYNVSLIVVKQAWS).

Represses the expression of the STM4065-STM4067 operon. This chain is HTH-type transcriptional repressor STM4068, found in Salmonella typhimurium (strain LT2 / SGSC1412 / ATCC 700720).